The sequence spans 2167 residues: SH3 and multiple ankyrin repeat domains protein 1 (2167 aa).

The disordered stretch occupies residues Met-1–Ser-63. Low complexity predominate over residues Ser-17–Gly-32. Over residues Pro-33 to Ala-47 the composition is skewed to gly residues. Arg-43 is modified (omega-N-methylarginine). Tyr-186 carries the post-translational modification Phosphotyrosine. ANK repeat units lie at residues Val-195–Ser-210, Ser-212–Arg-245, Asp-246–Arg-278, Arg-279–Glu-312, Asn-313–Ala-345, Ser-346–Asn-378, and Asn-379–Leu-395. 2 disordered regions span residues Ser-413 to Pro-432 and Ala-453 to Arg-546. Low complexity predominate over residues Ala-453–Thr-479. Positions Pro-527 to Gly-542 are enriched in gly residues. Ser-540 bears the Phosphoserine mark. Arg-544 is subject to Omega-N-methylarginine. Positions Val-554–Asn-613 constitute an SH3 domain. Phosphoserine is present on residues Ser-638, Ser-641, Ser-671, and Ser-791. One can recognise a PDZ domain in the interval Thr-663 to Thr-757. A disordered region spans residues Ile-841–Leu-894. Ser-898 carries the phosphoserine modification. Disordered stretches follow at residues Ser-917–Thr-1233, Arg-1245–Glu-1294, Gly-1308–Leu-1417, Arg-1429–Ala-1725, Gly-1740–Thr-1787, Lys-1842–Ala-1866, Pro-1898–His-1988, and Arg-2002–Leu-2029. The span at Ile-928–Pro-947 shows a compositional bias: pro residues. Position 958 is an omega-N-methylarginine (Arg-958). The span at Pro-964–Gly-980 shows a compositional bias: low complexity. A compositionally biased stretch (basic residues) spans Ala-1004–Pro-1028. Arg-1059 is subject to Omega-N-methylarginine. Over residues Ser-1064–Thr-1085 the composition is skewed to low complexity. Arg-1098 and Arg-1109 each carry omega-N-methylarginine. Composition is skewed to low complexity over residues Ser-1132–Arg-1146 and Ser-1171–Thr-1184. The span at Ser-1203–Pro-1224 shows a compositional bias: pro residues. Residues Arg-1245–Arg-1256 show a composition bias toward basic and acidic residues. Arg-1257 carries the post-translational modification Asymmetric dimethylarginine. Ser-1291 is subject to Phosphoserine. The span at Ala-1363 to Ser-1372 shows a compositional bias: basic and acidic residues. Residues Pro-1378–Thr-1395 are compositionally biased toward pro residues. The segment covering Leu-1396 to His-1408 has biased composition (basic residues). Residue Arg-1429 is modified to Omega-N-methylarginine. The residue at position 1442 (Ser-1442) is a Phosphoserine. Low complexity-rich tracts occupy residues Pro-1459 to Gly-1469 and Arg-1530 to Arg-1541. Residues Pro-1589–Ala-1615 show a composition bias toward pro residues. A compositionally biased stretch (polar residues) spans Asp-1624–Thr-1641. Positions Pro-1648–Gly-1676 are enriched in pro residues. The span at Val-1684–Leu-1694 shows a compositional bias: basic and acidic residues. Low complexity predominate over residues Glu-1695 to Ala-1708. The span at Glu-1709–Val-1724 shows a compositional bias: gly residues. Positions Pro-1850–Leu-1861 are enriched in pro residues. An Omega-N-methylarginine modification is found at Arg-1901. Composition is skewed to low complexity over residues Ser-1934–Ser-1945, Thr-1960–Ser-1985, and Arg-2002–Ala-2012. An omega-N-methylarginine mark is found at Arg-2022, Arg-2042, and Arg-2080. One can recognise an SAM domain in the interval Trp-2104–Arg-2167.

It belongs to the SHANK family. May homomultimerize via its SAM domain. Interacts with the C-terminus of SSTR2 via the PDZ domain. Interacts with SHARPIN, SPTAN1 and DLGAP1/GKAP. Part of a complex with DLG4/PSD-95 and DLGAP1/GKAP. Interacts with BAIAP2. Interacts with IGSF9. Interacts with HOMER1 and HOMER3. As to expression, expressed only in brain (neuropil of cortex, CA1 region hippocampus and molecular layer of cerebellum).

It is found in the cytoplasm. It localises to the synapse. The protein localises to the postsynaptic density. In terms of biological role, seems to be an adapter protein in the postsynaptic density (PSD) of excitatory synapses that interconnects receptors of the postsynaptic membrane including NMDA-type and metabotropic glutamate receptors, and the actin-based cytoskeleton. Plays a role in the structural and functional organization of the dendritic spine and synaptic junction. Overexpression promotes maturation of dendritic spines and the enlargement of spine heads via its ability to recruit Homer to postsynaptic sites, and enhances presynaptic function. This chain is SH3 and multiple ankyrin repeat domains protein 1 (Shank1), found in Rattus norvegicus (Rat).